The following is a 257-amino-acid chain: 5-oxoprolinase subunit A (257 aa).

This sequence belongs to the LamB/PxpA family. In terms of assembly, forms a complex composed of PxpA, PxpB and PxpC.

The enzyme catalyses 5-oxo-L-proline + ATP + 2 H2O = L-glutamate + ADP + phosphate + H(+). Catalyzes the cleavage of 5-oxoproline to form L-glutamate coupled to the hydrolysis of ATP to ADP and inorganic phosphate. This Oceanobacillus iheyensis (strain DSM 14371 / CIP 107618 / JCM 11309 / KCTC 3954 / HTE831) protein is 5-oxoprolinase subunit A.